Reading from the N-terminus, the 790-residue chain is Pre-mRNA-splicing factor cwf3 (790 aa).

17 HAT repeats span residues Asp12–Gly44, Ser45–Ala77, Glu89–Lys121, Pro123–Asp157, Gly159–Leu190, Glu193–Gln228, Thr233–Arg266, Gly268–Gln303, Lys331–Asp364, Lys368–Asn402, Asp404–Arg440, Ala457–Ser492, Gly494–Glu526, Ala528–Lys562, Thr567–Lys601, Tyr639–Lys673, and Gly675–Arg709. A disordered region spans residues Leu769–Asn790. The segment covering Ser775–Asn790 has biased composition (polar residues).

Belongs to the crooked-neck family. In terms of assembly, belongs to the 40S cdc5-associated complex (or cwf complex), a spliceosome sub-complex reminiscent of a late-stage spliceosome composed of the U2, U5 and U6 snRNAs and at least brr2, cdc5, cwf2/prp3, cwf3/syf1, cwf4/syf3, cwf5/ecm2, spp42/cwf6, cwf7/spf27, cwf8, cwf9, cwf10, cwf11, cwf12, prp45/cwf13, cwf14, cwf15, cwf16, cwf17, cwf18, cwf19, cwf20, cwf21, cwf22, cwf23, cwf24, cwf25, cwf26, cyp7/cwf27, cwf28, cwf29/ist3, lea1, msl1, prp5/cwf1, prp10, prp12/sap130, prp17, prp22, sap61, sap62, sap114, sap145, slu7, smb1, smd1, smd3, smf1, smg1 and syf2.

The protein resides in the nucleus. In terms of biological role, involved in pre-mRNA splicing and cell cycle progression. In Schizosaccharomyces pombe (strain 972 / ATCC 24843) (Fission yeast), this protein is Pre-mRNA-splicing factor cwf3 (cwf3).